Reading from the N-terminus, the 312-residue chain is tRNA uridine(34) hydroxylase (312 aa).

In terms of domain architecture, Rhodanese spans 124 to 218 (SDPEVLLIDT…YLEEVPQEQT (95 aa)). Cys-178 serves as the catalytic Cysteine persulfide intermediate. Composition is skewed to basic and acidic residues over residues 279–294 (TRES…ELAR) and 302–312 (IGRDPRQLNEA). Residues 279–312 (TRESARERQKQIELARARNQPHPIGRDPRQLNEA) are disordered.

Belongs to the TrhO family.

The enzyme catalyses uridine(34) in tRNA + AH2 + O2 = 5-hydroxyuridine(34) in tRNA + A + H2O. Catalyzes oxygen-dependent 5-hydroxyuridine (ho5U) modification at position 34 in tRNAs. The sequence is that of tRNA uridine(34) hydroxylase from Ectopseudomonas mendocina (strain ymp) (Pseudomonas mendocina).